Consider the following 231-residue polypeptide: Isoprenyl transferase (231 aa).

Aspartate 14 is a catalytic residue. Residue aspartate 14 participates in Mg(2+) binding. Substrate is bound by residues 15 to 18 (GNGR), tryptophan 19, arginine 27, histidine 31, and 59 to 61 (STE). Asparagine 62 functions as the Proton acceptor in the catalytic mechanism. Substrate contacts are provided by residues tryptophan 63, arginine 65, arginine 176, and 182–184 (RIS). Glutamate 195 contributes to the Mg(2+) binding site.

The protein belongs to the UPP synthase family. In terms of assembly, homodimer. It depends on Mg(2+) as a cofactor.

Functionally, catalyzes the condensation of isopentenyl diphosphate (IPP) with allylic pyrophosphates generating different type of terpenoids. In Aquifex aeolicus (strain VF5), this protein is Isoprenyl transferase.